Here is a 131-residue protein sequence, read N- to C-terminus: Global transcriptional regulator Spx 1 (131 aa).

A disulfide bridge connects residues C10 and C13.

Belongs to the ArsC family. Spx subfamily. In terms of assembly, interacts with the C-terminal domain of the alpha subunit of the RNAP.

The protein localises to the cytoplasm. In terms of biological role, global transcriptional regulator that plays a key role in stress response and exerts either positive or negative regulation of genes. Acts by interacting with the C-terminal domain of the alpha subunit of the RNA polymerase (RNAP). This interaction can enhance binding of RNAP to the promoter region of target genes and stimulate their transcription, or block interaction of RNAP with activator. This is Global transcriptional regulator Spx 1 from Oceanobacillus iheyensis (strain DSM 14371 / CIP 107618 / JCM 11309 / KCTC 3954 / HTE831).